We begin with the raw amino-acid sequence, 244 residues long: 1-(5-phosphoribosyl)-5-[(5-phosphoribosylamino)methylideneamino] imidazole-4-carboxamide isomerase (244 aa).

The active-site Proton acceptor is the Asp10. Asp129 acts as the Proton donor in catalysis.

This sequence belongs to the HisA/HisF family.

It localises to the cytoplasm. The catalysed reaction is 1-(5-phospho-beta-D-ribosyl)-5-[(5-phospho-beta-D-ribosylamino)methylideneamino]imidazole-4-carboxamide = 5-[(5-phospho-1-deoxy-D-ribulos-1-ylimino)methylamino]-1-(5-phospho-beta-D-ribosyl)imidazole-4-carboxamide. It participates in amino-acid biosynthesis; L-histidine biosynthesis; L-histidine from 5-phospho-alpha-D-ribose 1-diphosphate: step 4/9. This Rhodococcus opacus (strain B4) protein is 1-(5-phosphoribosyl)-5-[(5-phosphoribosylamino)methylideneamino] imidazole-4-carboxamide isomerase.